The primary structure comprises 207 residues: MTGRLKLVLASGSPRRLSLLNQAGIDPDALRPADVDETPERGELPRACANRLARAKADATLKAVQLDDDLRGSFILAADTVVAVGRRILPKADLADEASQCLRLLSGRNHRVYTAVCLVTPKGNCRQRLIETRVRFKRLTEEDIRGYVGSGEWRGKAGGYAVQGIAGSFVVKLVGSYTNVVGLPLYESVSLLGGEGFPIRSGWLNAG.

Asp-79 (proton acceptor) is an active-site residue.

The protein belongs to the Maf family. YhdE subfamily. A divalent metal cation serves as cofactor.

Its subcellular location is the cytoplasm. It carries out the reaction dTTP + H2O = dTMP + diphosphate + H(+). The enzyme catalyses UTP + H2O = UMP + diphosphate + H(+). Functionally, nucleoside triphosphate pyrophosphatase that hydrolyzes dTTP and UTP. May have a dual role in cell division arrest and in preventing the incorporation of modified nucleotides into cellular nucleic acids. The sequence is that of dTTP/UTP pyrophosphatase from Nitrobacter hamburgensis (strain DSM 10229 / NCIMB 13809 / X14).